Consider the following 289-residue polypeptide: Shikimate dehydrogenase (NADP(+)) (289 aa).

Residues Ser-19–Ser-21 and Thr-66 contribute to the shikimate site. Residue Lys-70 is the Proton acceptor of the active site. Residues Asn-91 and Asp-106 each contribute to the shikimate site. NADP(+)-binding positions include Gly-131–Ala-135 and Leu-229. Tyr-231 contacts shikimate. Residue Gly-252 coordinates NADP(+).

Belongs to the shikimate dehydrogenase family. As to quaternary structure, homodimer.

The enzyme catalyses shikimate + NADP(+) = 3-dehydroshikimate + NADPH + H(+). It functions in the pathway metabolic intermediate biosynthesis; chorismate biosynthesis; chorismate from D-erythrose 4-phosphate and phosphoenolpyruvate: step 4/7. Functionally, involved in the biosynthesis of the chorismate, which leads to the biosynthesis of aromatic amino acids. Catalyzes the reversible NADPH linked reduction of 3-dehydroshikimate (DHSA) to yield shikimate (SA). This Nostoc sp. (strain PCC 7120 / SAG 25.82 / UTEX 2576) protein is Shikimate dehydrogenase (NADP(+)).